Consider the following 433-residue polypeptide: Serine hydroxymethyltransferase (433 aa).

(6S)-5,6,7,8-tetrahydrofolate is bound by residues leucine 132 and 136–138 (GHL). Lysine 241 is subject to N6-(pyridoxal phosphate)lysine.

Belongs to the SHMT family. Homodimer. Requires pyridoxal 5'-phosphate as cofactor.

It is found in the cytoplasm. The enzyme catalyses (6R)-5,10-methylene-5,6,7,8-tetrahydrofolate + glycine + H2O = (6S)-5,6,7,8-tetrahydrofolate + L-serine. It participates in one-carbon metabolism; tetrahydrofolate interconversion. The protein operates within amino-acid biosynthesis; glycine biosynthesis; glycine from L-serine: step 1/1. In terms of biological role, catalyzes the reversible interconversion of serine and glycine with tetrahydrofolate (THF) serving as the one-carbon carrier. This reaction serves as the major source of one-carbon groups required for the biosynthesis of purines, thymidylate, methionine, and other important biomolecules. Also exhibits THF-independent aldolase activity toward beta-hydroxyamino acids, producing glycine and aldehydes, via a retro-aldol mechanism. In Bradyrhizobium sp. (strain ORS 278), this protein is Serine hydroxymethyltransferase.